The following is a 282-amino-acid chain: Putative 4-diphosphocytidyl-2-C-methyl-D-erythritol kinase (282 aa).

Lysine 10 is an active-site residue. Residue 94 to 104 (PICAGLGGGSS) participates in ATP binding. Aspartate 136 is a catalytic residue.

The protein belongs to the GHMP kinase family. IspE subfamily.

It carries out the reaction 4-CDP-2-C-methyl-D-erythritol + ATP = 4-CDP-2-C-methyl-D-erythritol 2-phosphate + ADP + H(+). In terms of biological role, catalyzes the phosphorylation of the position 2 hydroxy group of 4-diphosphocytidyl-2C-methyl-D-erythritol. The polypeptide is Putative 4-diphosphocytidyl-2-C-methyl-D-erythritol kinase (ipk) (Streptococcus mutans serotype c (strain ATCC 700610 / UA159)).